The sequence spans 140 residues: Oocyte-expressed protein homolog (140 aa).

Residues 40 to 101 form the KH; atypical domain; it reads PLVFFLEAWL…AVQRQVKSVL (62 aa).

The protein belongs to the KHDC1 family. In terms of assembly, component of the subcortical maternal complex (SCMC), at least composed of NLRP5, KHDC3, OOEP, and TLE6. Within the complex, interacts with NLRP5, KHDC3 and TLE6. As part of the SCMC interacts with the SCMC-associated protein NLRP4F. The SCMC may facilitate translocation of its components between the nuclear and cytoplasmic compartments. Forms a scaffold complex with KHDC3/FILIA, and interacts with BLM and TRIM25 at DNA replication forks.

Its subcellular location is the cytoplasm. The protein resides in the nucleus. Its function is as follows. Component of the subcortical maternal complex (SCMC), a multiprotein complex that plays a key role in early embryonic development. The SCMC complex is a structural constituent of cytoplasmic lattices, which consist in fibrous structures found in the cytoplasm of oocytes and preimplantation embryos. They are required to store maternal proteins critical for embryonic development, such as proteins that control epigenetic reprogramming of the preimplantation embryo, and prevent their degradation or activation. As part of the OOEP-KHDC3 scaffold, recruits BLM and TRIM25 to DNA replication forks, thereby promoting the ubiquitination of BLM by TRIM25, enhancing BLM retainment at replication forks and therefore promoting stalled replication fork restart. Positively regulates the homologous recombination-mediated DNA double-strand break (DSB) repair pathway by regulating ATM activation and RAD51 recruitment to DSBs in oocytes. Thereby contributes to oocyte survival and the resumption and completion of meiosis. The sequence is that of Oocyte-expressed protein homolog (OOEP) from Bos taurus (Bovine).